The chain runs to 823 residues: MEALGTGRDRTSQASATESLDLRRLSTRADSAYSSFSTASGDPETRTPSPGTERLPYLDWDYVRVVWGSQSPTSKDAVLSTTQRPVQAVAGHSDPRSPEVQGSPGPLNRQDTPLLYALAAEAEATAHTAEPPSPPASRDAYRQRLQGAQRRVLRETSFQRKEFRMSLPGRLRPAVPTRLPTAHVRSASSSQELGEEEPARTAVPALAAAGRGRLSSQQRQCCFSEPGKLHRVGWSGGPTGEDLRKDYSTQELQRGMHAKSKGLLETQSLSSTELNSGPADLGNAHRPAGRSQSVSGEVMGPCKGSERTVATVQAVPQRADIRRPLLHTKLSRSLTQKEVTGVCPGEALQTKPAGCGRRISETSVSTPGPSLPEDDVFLREAKTPSPQDSQGLPTSTSYRQYENDLSKKAGQIAVSAERPLHETPGITGTEDCGQAVNGSVDLSRPTSIPETTNDDIPTFDTNGTTDPSAATEKKPLKPPPVDVLRPSDSETPGSPHHTSLTWGQFDSKTTWPSRHFEALVQELARLDPSLSRTLAAQPGPEPPQGLLDGLFPVEEIRSAMRPALEEMGEKAAGASEEGSCGHHLTQDLQTSQEASRSENSTPDPDQSSGQEFPEGNSTQAKKVELARLLQKMLQDLHAEQERLRGTAADWTQRNGALEAAVSQACTPRELERFRRFMTDLERVLGLLLLLGSRLVRVNLALARAGSNSDPDERASLLQRLQLLQRQQEEAKELKEHVARREQTLRQVLERELPAEHLRSYCVLLASKARILSQQRSLDDRIRFLKDQLDTIWSDLSHHPLSPRLTWAPAIRPLNKQPFLATLI.

M1 is modified (N-acetylmethionine). Disordered stretches follow at residues 1–55 (MEAL…TERL), 72–110 (PTSKDAVLSTTQRPVQAVAGHSDPRSPEVQGSPGPLNRQ), and 124–159 (ATAHTAEPPSPPASRDAYRQRLQGAQRRVLRETSFQ). Composition is skewed to polar residues over residues 28–50 (RADSAYSSFSTASGDPETRTPSP) and 72–85 (PTSKDAVLSTTQRP). Residues S103, S133, S137, S166, S190, and S224 each carry the phosphoserine modification. In terms of domain architecture, ASD1 spans 145–233 (LQGAQRRVLR…SEPGKLHRVG (89 aa)). The tract at residues 181–200 (TAHVRSASSSQELGEEEPAR) is disordered. 2 disordered regions span residues 270 to 303 (SSTELNSGPADLGNAHRPAGRSQSVSGEVMGPCK) and 349 to 375 (QTKPAGCGRRISETSVSTPGPSLPEDD). Position 383 is a phosphothreonine (T383). S385 is subject to Phosphoserine. Disordered stretches follow at residues 420–503 (LHET…LTWG) and 566–620 (EMGE…STQA). 3 stretches are compositionally biased toward polar residues: residues 444–468 (RPTSIPETTNDDIPTFDTNGTTDPS), 489–503 (SETPGSPHHTSLTWG), and 586–620 (QDLQTSQEASRSENSTPDPDQSSGQEFPEGNSTQA). The ASD2 domain occupies 517-796 (EALVQELARL…QLDTIWSDLS (280 aa)).

This sequence belongs to the shroom family. In terms of assembly, interacts with F-actin.

It localises to the cytoplasm. It is found in the cytoskeleton. In terms of biological role, may be involved in the assembly of microtubule arrays during cell elongation. This is Protein Shroom1 (Shroom1) from Mus musculus (Mouse).